Here is a 357-residue protein sequence, read N- to C-terminus: Alanine racemase (357 aa).

Residue lysine 33 is the Proton acceptor; specific for D-alanine of the active site. Lysine 33 bears the N6-(pyridoxal phosphate)lysine mark. Arginine 129 is a binding site for substrate. Tyrosine 253 acts as the Proton acceptor; specific for L-alanine in catalysis. Position 301 (methionine 301) interacts with substrate.

It belongs to the alanine racemase family. The cofactor is pyridoxal 5'-phosphate.

It catalyses the reaction L-alanine = D-alanine. It participates in amino-acid biosynthesis; D-alanine biosynthesis; D-alanine from L-alanine: step 1/1. In terms of biological role, catalyzes the interconversion of L-alanine and D-alanine. May also act on other amino acids. The polypeptide is Alanine racemase (alr) (Pseudomonas fluorescens (strain ATCC BAA-477 / NRRL B-23932 / Pf-5)).